The sequence spans 263 residues: 3-methyl-2-oxobutanoate hydroxymethyltransferase (263 aa).

Asp-43 and Asp-82 together coordinate Mg(2+). 3-methyl-2-oxobutanoate is bound by residues 43-44 (DS), Asp-82, and Lys-111. Glu-113 contacts Mg(2+). The active-site Proton acceptor is Glu-179.

The protein belongs to the PanB family. Homodecamer; pentamer of dimers. Requires Mg(2+) as cofactor.

It is found in the cytoplasm. It catalyses the reaction 3-methyl-2-oxobutanoate + (6R)-5,10-methylene-5,6,7,8-tetrahydrofolate + H2O = 2-dehydropantoate + (6S)-5,6,7,8-tetrahydrofolate. Its pathway is cofactor biosynthesis; (R)-pantothenate biosynthesis; (R)-pantoate from 3-methyl-2-oxobutanoate: step 1/2. Its function is as follows. Catalyzes the reversible reaction in which hydroxymethyl group from 5,10-methylenetetrahydrofolate is transferred onto alpha-ketoisovalerate to form ketopantoate. This is 3-methyl-2-oxobutanoate hydroxymethyltransferase from Neisseria gonorrhoeae (strain ATCC 700825 / FA 1090).